The sequence spans 195 residues: Probable thymidylate kinase (195 aa).

7-14 provides a ligand contact to ATP; the sequence is GIDGVGKT.

The protein belongs to the thymidylate kinase family.

The enzyme catalyses dTMP + ATP = dTDP + ADP. This chain is Probable thymidylate kinase, found in Methanosphaera stadtmanae (strain ATCC 43021 / DSM 3091 / JCM 11832 / MCB-3).